The chain runs to 281 residues: Putative phosphatase/phosphodiesterase MG246 (281 aa).

Fe cation is bound by residues aspartate 11, glutamate 42, asparagine 43, and asparagine 70. Histidine 71 (proton donor) is an active-site residue. Fe cation contacts are provided by histidine 157, histidine 182, and histidine 184.

This sequence belongs to the YmdB-like family. Fe(3+) is required as a cofactor.

This chain is Putative phosphatase/phosphodiesterase MG246, found in Mycoplasma genitalium (strain ATCC 33530 / DSM 19775 / NCTC 10195 / G37) (Mycoplasmoides genitalium).